A 334-amino-acid polypeptide reads, in one-letter code: D-aspartate oxidase 2 (334 aa).

5 residues coordinate FAD: Asp38, Lys39, Ser46, Gly310, and Thr315.

The protein belongs to the DAMOX/DASOX family. FAD serves as cofactor. As to expression, expressed in the intestinal cells, pharyngeal muscles, and body wall muscles in adult hermaphrodites.

It localises to the cytoplasm. The enzyme catalyses D-aspartate + O2 + H2O = oxaloacetate + H2O2 + NH4(+). It catalyses the reaction D-glutamate + O2 + H2O = H2O2 + 2-oxoglutarate + NH4(+). With respect to regulation, inhibited by thiolactomycin. Selectively catalyzes the oxidative deamination of acidic amino acids. May play a role in the egg-laying events and early development of the worm, in addition to quality control of the germ cells. This is D-aspartate oxidase 2 (ddo-2) from Caenorhabditis elegans.